The following is a 491-amino-acid chain: Serine/threonine-protein phosphatase 2A regulatory subunit B'' subunit delta (491 aa).

One can recognise an EF-hand domain in the interval 331 to 366; it reads TTPTSTEYWFRCMDLDGDGALSMFELEFFYEEQAQR. Residues aspartate 344, aspartate 346, aspartate 348, and glutamate 355 each coordinate Ca(2+). Composition is skewed to acidic residues over residues 460–473 and 481–491; these read AMAE…EGSD and ADEDCDDLEPL. Positions 460 to 491 are disordered; the sequence is AMAEDDDDHDEGSDPIDLYGLADEDCDDLEPL.

In terms of assembly, PP2A consists of a common heterodimeric core enzyme, composed of a 36 kDa catalytic subunit (subunit C) and a 65 kDa constant regulatory subunit (PR65 or subunit A), that associates with a variety of regulatory subunits. Proteins that associate with the core dimer include three families of regulatory subunits B (the R2/B/PR55/B55, R3/B''/PR72/PR130/PR59 and R5/B'/B56 families), the 48 kDa variable regulatory subunit, viral proteins, and cell signaling molecules. In terms of tissue distribution, expressed in testis, kidney, liver, lung, spleen, brain and heart.

In terms of biological role, the B regulatory subunit might modulate substrate selectivity and catalytic activity, and might also direct the localization of the catalytic enzyme to a particular subcellular compartment. Interacts with retinoblastoma-related protein p107 (in vivo). May target PP2A core dimer to p107 resulting in dephosphorylation of p107. This Mus musculus (Mouse) protein is Serine/threonine-protein phosphatase 2A regulatory subunit B'' subunit delta (Ppp2r3d).